The following is a 234-amino-acid chain: Triosephosphate isomerase (234 aa).

8–10 (NFK) is a substrate binding site. His-90 (electrophile) is an active-site residue. Glu-159 acts as the Proton acceptor in catalysis. Residues Gly-165, Ser-197, and 218-219 (GS) each bind substrate.

As to quaternary structure, homodimer.

It is found in the cytoplasm. The catalysed reaction is D-glyceraldehyde 3-phosphate = dihydroxyacetone phosphate. Its pathway is carbohydrate biosynthesis; gluconeogenesis. It functions in the pathway carbohydrate degradation; glycolysis; D-glyceraldehyde 3-phosphate from glycerone phosphate: step 1/1. In terms of biological role, involved in the gluconeogenesis. Catalyzes stereospecifically the conversion of dihydroxyacetone phosphate (DHAP) to D-glyceraldehyde-3-phosphate (G3P). This chain is Triosephosphate isomerase, found in Helicobacter pylori (strain ATCC 700392 / 26695) (Campylobacter pylori).